The sequence spans 144 residues: 3-hydroxyacyl-[acyl-carrier-protein] dehydratase FabZ (144 aa).

Residue H51 is part of the active site.

It belongs to the thioester dehydratase family. FabZ subfamily.

It is found in the cytoplasm. It carries out the reaction a (3R)-hydroxyacyl-[ACP] = a (2E)-enoyl-[ACP] + H2O. Functionally, involved in unsaturated fatty acids biosynthesis. Catalyzes the dehydration of short chain beta-hydroxyacyl-ACPs and long chain saturated and unsaturated beta-hydroxyacyl-ACPs. This chain is 3-hydroxyacyl-[acyl-carrier-protein] dehydratase FabZ, found in Clostridium botulinum (strain 657 / Type Ba4).